A 217-amino-acid chain; its full sequence is External core antigen (217 aa).

The N-terminal stretch at 1 to 19 is a signal peptide; it reads MYLFHLCLVFACVPCPTFQ. The segment at 26–28 is HBEAG; sequence GWL. Residues 180 to 217 are disordered; that stretch reads RRGGARASRSPRRRTPSPRRRRSQSPRRRRSQSPSANC. Residues 188-210 show a composition bias toward basic residues; sequence RSPRRRTPSPRRRRSQSPRRRRS. A 1; half-length repeat occupies 189–195; sequence SPRRRTP. Residues 189–211 are 3 X 8 AA repeats of S-P-R-R-R-R-S-Q; sequence SPRRRTPSPRRRRSQSPRRRRSQ. Residues 189–217 constitute a propeptide that is removed on maturation; sequence SPRRRTPSPRRRRSQSPRRRRSQSPSANC. 2 repeat units span residues 196 to 203 and 204 to 211.

Belongs to the orthohepadnavirus precore antigen family. As to quaternary structure, homodimerizes. In terms of processing, phosphorylated. Post-translationally, cleaved by host furin.

Its subcellular location is the secreted. It is found in the host nucleus. May regulate immune response to the intracellular capsid in acting as a T-cell tolerogen, by having an immunoregulatory effect which prevents destruction of infected cells by cytotoxic T-cells. This immune regulation may predispose to chronicity during perinatal infections and prevent severe liver injury during adult infections. This chain is External core antigen, found in Marmota monax (Woodchuck).